A 483-amino-acid polypeptide reads, in one-letter code: MQEFTKFPTKTGRRSLSRSISQSSTDSYSSAASYTDSSDDEVSPREKQQTNSKGSSNFCVKNIKQAEFGRREIEIAEQDMSALISLRKRAQGEKPLAGAKIVGCTHITAQTAVLIETLCALGAQCRWSACNIYSTQNEVAAALAEAGVAVFAWKGESEDDFWWCIDRCVNMDGWQANMILDDGGDLTHWVYKKYPNVFKKIRGIVEESVTGVHRLYQLSKAGKLCVPAMNVNDSVTKQKFDNLYCCRESILDGLKRTTDVMFGGKQVVVCGYGEVGKGCCAALKALGAIVYITEIDPICALQACMDGFRVVKLNEVIRQVDVVITCTGNKNVVTREHLDRMKNSCIVCNMGHSNTEIDVTSLRTPELTWERVRSQVDHVIWPDGKRVVLLAEGRLLNLSCSTVPTFVLSITATTQALALIELYNAPEGRYKQDVYLLPKKMDEYVASLHLPSFDAHLTELTDDQAKYLGLNKNGPFKPNYYRY.

Residues M1–S56 are disordered. The span at S17 to D36 shows a compositional bias: low complexity. Residues R18 to R45 form a PEST region. The residue at position 21 (S21) is a Phosphoserine; by PKD. Phosphoserine is present on residues S24, S27, S30, and S37. The interaction with BCL2L10 stretch occupies residues Q91–K154. Positions 108, 182, 207, 237, and 241 each coordinate substrate. The segment at S234–S401 is NAD binding. NAD(+)-binding positions include G271 to V275, E294, and N329. At S344 the chain carries Phosphoserine. Position 350–352 (M350–H352) interacts with NAD(+). Positions N473 to Y483 are PDZ-binding.

Belongs to the adenosylhomocysteinase family. In terms of assembly, forms multimers. Forms heteromultimers with AHCYL2 (via the C-terminal region). Interacts (when phosphorylated) with ITPR1 (when not phosphorylated); the interaction suppresses inositol 1,4,5-trisphosphate binding to ITPR1. Interacts with BCL2L10; this strengthens the interaction of AHCYL1 with ITPR1. Interacts with CFTR and SLC26A6; the interactions take place once AHCYL1 is released from ITPR1 and increase CFTR and SLC26A6 activities. Interacts with RRM1; in a phosphorylation- and (dATP)-dependent manner. Interacts (via PEST domain when phosphorylated) with SLC4A4 isoform 1 but not isoform 2; the interaction increases SLC4A4 isoform 1 activity. Interacts (when phosphorylated) with SLC9A3; the interaction is required for SLC9A3 apical location and activity. Interacts (when phosphorylated) with FIP1L1; the interaction is direct and associates AHCYL1 with the CPSF complex and RNA. Interacts with PAPOLA. Interacts with ZCCHC4. Interacts with AHCY. NAD(+) serves as cofactor. In terms of processing, phosphorylated at Ser/Thr residues between Ser-21 and Thr-25 in the PEST region: required for interaction with dATP-bound RRM1 and ITPR1. Phosphorylation at Ser-21 by PRKD1 and CAMK4 is required for further phosphorylations by CSNK1A1. Phosphorylation is induced by oxidative stress. Probably phosphorylated by CAMK2A; phosphorylation at Ser-21 may be required for interaction with SLC9A3. Dephosphorylated in response to apoptotic stress conditions which causes translocation of both AHCYL1 and BCL2L10 from mitochondria-associated endoplasmic reticulum membranes and promotes apoptosis. As to expression, expressed in kidney proximal tubules and outer medulla (at protein level).

Its subcellular location is the endoplasmic reticulum. It localises to the cytoplasm. It is found in the cytosol. The protein resides in the apical cell membrane. The protein localises to the microsome. Its function is as follows. Multifaceted cellular regulator which coordinates several essential cellular functions including regulation of epithelial HCO3(-) and fluid secretion, mRNA processing and DNA replication. Regulates ITPR1 sensitivity to inositol 1,4,5-trisphosphate, competing for the common binding site and acting as endogenous 'pseudoligand' whose inhibitory activity can be modulated by its phosphorylation status. Promotes the formation of contact points between the endoplasmic reticulum (ER) and mitochondria, facilitating transfer of Ca(2+) from the ER to mitochondria. Under normal cellular conditions, functions cooperatively with BCL2L10 to limit ITPR1-mediated Ca(2+) release but, under apoptotic stress conditions, dephosphorylated which promotes dissociation of both AHCYL1 and BCL2L10 from mitochondria-associated endoplasmic reticulum membranes, inhibits BCL2L10 interaction with ITPR1 and leads to increased Ca(2+) transfer to mitochondria which promotes apoptosis. In the pancreatic and salivary ducts, at resting state, attenuates inositol 1,4,5-trisphosphate-induced calcium release by interacting with ITPR1. When extracellular stimuli induce ITPR1 phosphorylation or inositol 1,4,5-trisphosphate production, dissociates from ITPR1 to interact with CFTR and SLC26A6, mediating their synergistic activation by calcium and cAMP that stimulates the epithelial secretion of electrolytes and fluid. Also activates basolateral SLC4A4 isoform 1 to coordinate fluid and HCO3(-) secretion. Inhibits the effect of STK39 on SLC4A4 and CFTR by recruiting PP1 phosphatase which activates SLC4A4, SLC26A6 and CFTR through dephosphorylation. Mediates the induction of SLC9A3 surface expression produced by Angiotensin-2. Depending on the cell type, activates SLC9A3 in response to calcium or reverses SLC9A3R2-dependent calcium inhibition. May modulate the polyadenylation state of specific mRNAs, both by controlling the subcellular location of FIP1L1 and by inhibiting PAPOLA activity, in response to a stimulus that alters its phosphorylation state. Acts as a (dATP)-dependent inhibitor of ribonucleotide reductase large subunit RRM1, controlling the endogenous dNTP pool and ensuring normal cell cycle progression. In vitro does not exhibit any S-adenosyl-L-homocysteine hydrolase activity. This Rattus norvegicus (Rat) protein is S-adenosylhomocysteine hydrolase-like protein 1.